Here is a 76-residue protein sequence, read N- to C-terminus: Small nuclear ribonucleoprotein G (76 aa).

The region spanning 4-76 is the Sm domain; it reads AHPPELKKFM…IIMLEALERV (73 aa).

It belongs to the snRNP Sm proteins family. Core component of the spliceosomal U1, U2, U4 and U5 small nuclear ribonucleoproteins (snRNPs), the building blocks of the spliceosome. Most spliceosomal snRNPs contain a common set of Sm proteins, SNRPB, SNRPD1, SNRPD2, SNRPD3, SNRPE, SNRPF and SNRPG that assemble in a heptameric protein ring on the Sm site of the small nuclear RNA to form the core snRNP. Component of the U1 snRNP. The U1 snRNP is composed of the U1 snRNA and the 7 core Sm proteins SNRPB, SNRPD1, SNRPD2, SNRPD3, SNRPE, SNRPF and SNRPG, and at least three U1 snRNP-specific proteins SNRNP70/U1-70K, SNRPA/U1-A and SNRPC/U1-C. Component of the U4/U6-U5 tri-snRNP complex composed of the U4, U6 and U5 snRNAs and at least PRPF3, PRPF4, PRPF6, PRPF8, PRPF31, SNRNP200, TXNL4A, SNRNP40, SNRPB, SNRPD1, SNRPD2, SNRPD3, SNRPE, SNRPF, SNRPG, DDX23, CD2BP2, PPIH, SNU13, EFTUD2, SART1 and USP39, plus LSM2, LSM3, LSM4, LSM5, LSM6, LSM7 and LSM8. Component of the U7 snRNP complex, or U7 Sm protein core complex, that is composed of the U7 snRNA and at least LSM10, LSM11, SNRPB, SNRPD3, SNRPE, SNRPF and SNRPG; the complex does not contain SNRPD1 and SNRPD2. Component of the minor spliceosome, which splices U12-type introns. Part of the SMN-Sm complex that contains SMN1, GEMIN2/SIP1, DDX20/GEMIN3, GEMIN4, GEMIN5, GEMIN6, GEMIN7, GEMIN8, STRAP/UNRIP and the Sm proteins SNRPB, SNRPD1, SNRPD2, SNRPD3, SNRPE, SNRPF and SNRPG; catalyzes core snRNPs assembly. Forms a 6S pICln-Sm complex composed of CLNS1A/pICln, SNRPD1, SNRPD2, SNRPE, SNRPF and SNRPG; ring-like structure where CLNS1A/pICln mimics additional Sm proteins and which is unable to assemble into the core snRNP. Interacts with GEMIN2 (via N-terminus); the interaction is direct. Interacts with SNRPE; the interaction is direct.

Its subcellular location is the cytoplasm. The protein localises to the cytosol. The protein resides in the nucleus. Functionally, plays a role in pre-mRNA splicing as a core component of the spliceosomal U1, U2, U4 and U5 small nuclear ribonucleoproteins (snRNPs), the building blocks of the spliceosome. Component of both the pre-catalytic spliceosome B complex and activated spliceosome C complexes. As a component of the minor spliceosome, involved in the splicing of U12-type introns in pre-mRNAs. As part of the U7 snRNP it is involved in histone 3'-end processing. This Bos taurus (Bovine) protein is Small nuclear ribonucleoprotein G (SNRPG).